Reading from the N-terminus, the 153-residue chain is 3-hydroxyacyl-[acyl-carrier-protein] dehydratase FabZ (153 aa).

Residue histidine 56 is part of the active site.

This sequence belongs to the thioester dehydratase family. FabZ subfamily.

The protein localises to the cytoplasm. It catalyses the reaction a (3R)-hydroxyacyl-[ACP] = a (2E)-enoyl-[ACP] + H2O. Its function is as follows. Involved in unsaturated fatty acids biosynthesis. Catalyzes the dehydration of short chain beta-hydroxyacyl-ACPs and long chain saturated and unsaturated beta-hydroxyacyl-ACPs. The polypeptide is 3-hydroxyacyl-[acyl-carrier-protein] dehydratase FabZ (Nitrosomonas europaea (strain ATCC 19718 / CIP 103999 / KCTC 2705 / NBRC 14298)).